We begin with the raw amino-acid sequence, 495 residues long: Cobyric acid synthase (495 aa).

The GATase cobBQ-type domain occupies 250–444 (SLKISILRLP…LHGLFDNGAW (195 aa)). Residue cysteine 331 is the Nucleophile of the active site. Histidine 436 is an active-site residue.

Belongs to the CobB/CobQ family. CobQ subfamily.

Its pathway is cofactor biosynthesis; adenosylcobalamin biosynthesis. Its function is as follows. Catalyzes amidations at positions B, D, E, and G on adenosylcobyrinic A,C-diamide. NH(2) groups are provided by glutamine, and one molecule of ATP is hydrogenolyzed for each amidation. The polypeptide is Cobyric acid synthase (Rippkaea orientalis (strain PCC 8801 / RF-1) (Cyanothece sp. (strain PCC 8801))).